A 776-amino-acid chain; its full sequence is Calcium-independent phospholipase A2-gamma (776 aa).

Residues Asn4 and Asn157 are each glycosylated (N-linked (GlcNAc...) asparagine). 2 disordered regions span residues 216–276 (KGKM…HPVS) and 306–334 (KLKS…DKKA). Composition is skewed to basic and acidic residues over residues 221-239 (QTKE…ERKS) and 247-263 (VADR…KDKL). The 196-residue stretch at 439–634 (LTIDGGGTRG…LLNNPSALAL (196 aa)) folds into the PNPLA domain. The short motif at 443-448 (GGGTRG) is the GXGXXG element. The helical transmembrane segment at 469 to 489 (LFDYICGVSTGAILAFMLGLF) threads the bilayer. The GXSXG motif lies at 475-479 (GVSTG). Ser477 serves as the catalytic Nucleophile. Asp621 (proton acceptor) is an active-site residue. The short motif at 621–623 (DGG) is the DGA/G element. At Lys730 the chain carries N6-succinyllysine.

In terms of tissue distribution, expressed in myocardium (at protein level).

Its subcellular location is the endoplasmic reticulum membrane. It is found in the mitochondrion membrane. The protein localises to the peroxisome membrane. The enzyme catalyses a 1,2-diacyl-sn-glycero-3-phosphocholine + H2O = a 1-acyl-sn-glycero-3-phosphocholine + a fatty acid + H(+). It carries out the reaction a 1,2-diacyl-sn-glycero-3-phosphocholine + H2O = a 2-acyl-sn-glycero-3-phosphocholine + a fatty acid + H(+). The catalysed reaction is a 1,2-diacyl-sn-glycero-3-phosphoethanolamine + H2O = a 1-acyl-sn-glycero-3-phosphoethanolamine + a fatty acid + H(+). It catalyses the reaction a 1-O-(1Z-alkenyl)-2-acyl-sn-glycero-3-phosphocholine + H2O = a 1-O-(1Z-alkenyl)-sn-glycero-3-phosphocholine + a fatty acid + H(+). The enzyme catalyses a 1-acyl-sn-glycero-3-phosphocholine + H2O = sn-glycerol 3-phosphocholine + a fatty acid + H(+). It carries out the reaction 1-hexadecanoyl-2-(5Z,8Z,11Z,14Z-eicosatetraenoyl)-sn-glycero-3-phosphocholine + H2O = 2-(5Z,8Z,11Z,14Z)-eicosatetraenoyl-sn-glycero-3-phosphocholine + hexadecanoate + H(+). The catalysed reaction is 1-acyl-2-(9Z,12Z)-octadecadienoyl-sn-glycero-3-phosphocholine + H2O = a 1-acyl-sn-glycero-3-phosphocholine + (9Z,12Z)-octadecadienoate + H(+). It catalyses the reaction 1-acyl-2-(5Z,8Z,11Z,14Z-eicosatetraenoyl)-sn-glycero-3-phosphocholine + H2O = a 1-acyl-sn-glycero-3-phosphocholine + (5Z,8Z,11Z,14Z)-eicosatetraenoate + H(+). The enzyme catalyses 1-hexadecanoyl-2-(5Z,8Z,11Z,14Z-eicosatetraenoyl)-sn-glycero-3-phosphocholine + H2O = 1-hexadecanoyl-sn-glycero-3-phosphocholine + (5Z,8Z,11Z,14Z)-eicosatetraenoate + H(+). It carries out the reaction 1-octadecanoyl-2-(9Z-octadecenoyl)-sn-glycero-3-phosphocholine + H2O = 1-octadecanoyl-sn-glycero-3-phosphocholine + (9Z)-octadecenoate + H(+). The catalysed reaction is 1-hexadecanoyl-2-(9Z-octadecenoyl)-sn-glycero-3-phosphocholine + H2O = 1-hexadecanoyl-sn-glycero-3-phosphocholine + (9Z)-octadecenoate + H(+). It catalyses the reaction 1-hexadecanoyl-2-(9Z,12Z-octadecadienoyl)-sn-glycero-3-phosphocholine + H2O = (9Z,12Z)-octadecadienoate + 1-hexadecanoyl-sn-glycero-3-phosphocholine + H(+). The enzyme catalyses 1-acyl-2-(9Z,12Z)-octadecadienoyl-sn-glycero-3-phosphoethanolamine + H2O = a 1-acyl-sn-glycero-3-phosphoethanolamine + (9Z,12Z)-octadecadienoate + H(+). It carries out the reaction 1-acyl-2-(5Z,8Z,11Z,14Z)-eicosatetraenoyl-sn-glycero-3-phosphoethanolamine + H2O = a 1-acyl-sn-glycero-3-phosphoethanolamine + (5Z,8Z,11Z,14Z)-eicosatetraenoate + H(+). The catalysed reaction is 1-hexadecanoyl-2-(5Z,8Z,11Z,14Z-eicosatetraenoyl)-sn-glycero-3-phosphoethanolamine + H2O = 1-hexadecanoyl-sn-glycero-3-phosphoethanolamine + (5Z,8Z,11Z,14Z)-eicosatetraenoate + H(+). It catalyses the reaction 1-octadecanoyl-2-(9Z-octadecenoyl)-sn-glycero-3-phosphocholine + H2O = 2-(9Z-octadecenoyl)-sn-glycero-3-phosphocholine + octadecanoate + H(+). The enzyme catalyses 1-hexadecanoyl-2-(4Z,7Z,10Z,13Z,16Z,19Z-docosahexaenoyl)-sn-glycero-3-phosphocholine + H2O = 2-(4Z,7Z,10Z,13Z,16Z,19Z-docosahexaenoyl)-sn-glycero-3-phosphocholine + hexadecanoate + H(+). It carries out the reaction 1-O-(1Z)-hexadecenyl-2 (5Z,8Z,11Z,14Z)-eicosatetraenoyl-sn-glycero-3-phosphocholine + H2O = 1-(1Z-hexadecenyl)-sn-glycero-3-phosphocholine + (5Z,8Z,11Z,14Z)-eicosatetraenoate + H(+). The catalysed reaction is 1-O-(1Z-hexadecenyl)-2-(9Z-octadecenoyl)-sn-glycero-3-phosphocholine + H2O = 1-(1Z-hexadecenyl)-sn-glycero-3-phosphocholine + (9Z)-octadecenoate + H(+). It catalyses the reaction 1-hexadecanoyl-sn-glycero-3-phosphocholine + H2O = sn-glycerol 3-phosphocholine + hexadecanoate + H(+). The enzyme catalyses 1',3'-bis-[1,2-di-(9Z,12Z-octadecadienoyl)-sn-glycero-3-phospho]-glycerol + H2O = 1'-[1,2-di-(9Z,12Z-octadecadienoyl)-sn-glycero-3-phospho]-3'-[1-(9Z,12Z-octadecadienoyl)-sn-glycero-3-phospho]-glycerol + (9Z,12Z)-octadecadienoate + H(+). It carries out the reaction 1'-[1-acyl-2-(9-hydroxy-(10E,12Z)-octadecadienoyl)-sn-glycero-3-phospho]-3'-[1,2-diacyl-sn-glycero-3-phospho]-glycerol + H2O = 9-hydroxy-(10E,12Z)-octadecadienoate + 1'-[1,2-diacyl-sn-glycero-3-phospho],3'-[1-acyl-sn-glycero-3-phospho]-glycerol + H(+). It functions in the pathway phospholipid metabolism. With respect to regulation, calcium-independent phospholipase. In terms of biological role, calcium-independent and membrane-bound phospholipase, that catalyzes the esterolytic cleavage of fatty acids from glycerophospholipids to yield free fatty acids and lysophospholipids, hence regulating membrane physical properties and the release of lipid second messengers and growth factors. Hydrolyzes phosphatidylethanolamine, phosphatidylcholine and probably phosphatidylinositol with a possible preference for the former. Also has a broad substrate specificity in terms of fatty acid moieties, hydrolyzing saturated and mono-unsaturated fatty acids at nearly equal rates from either the sn-1 or sn-2 position in diacyl phosphatidylcholine. However, has a weak activity toward polyunsaturated fatty acids at the sn-2 position, and thereby favors the production of 2-arachidonoyl lysophosphatidylcholine, a key branch point metabolite in eicosanoid signaling. On the other hand, can produce arachidonic acid from the sn-1 position of diacyl phospholipid and from the sn-2 position of arachidonate-containing plasmalogen substrates. Therefore, plays an important role in the mobilization of arachidonic acid in response to cellular stimuli and the generation of lipid second messengers. Can also hydrolyze lysophosphatidylcholine. In the mitochondrial compartment, catalyzes the hydrolysis and release of oxidized aliphatic chains from cardiolipin and integrates mitochondrial bioenergetics and signaling. It is essential for maintaining efficient bioenergetic mitochondrial function through tailoring mitochondrial membrane lipid metabolism and composition. This is Calcium-independent phospholipase A2-gamma from Mus musculus (Mouse).